We begin with the raw amino-acid sequence, 154 residues long: Endoribonuclease YbeY (154 aa).

Zn(2+) contacts are provided by H113, H117, and H123.

The protein belongs to the endoribonuclease YbeY family. It depends on Zn(2+) as a cofactor.

The protein localises to the cytoplasm. Its function is as follows. Single strand-specific metallo-endoribonuclease involved in late-stage 70S ribosome quality control and in maturation of the 3' terminus of the 16S rRNA. The chain is Endoribonuclease YbeY from Vibrio cholerae serotype O1 (strain ATCC 39315 / El Tor Inaba N16961).